A 1020-amino-acid chain; its full sequence is Probable leucine-rich repeat receptor-like serine/threonine-protein kinase At3g14840 (1020 aa).

The N-terminal stretch at 1 to 26 (MSLNRQLLFTYYFIVSLILFSDFVSS) is a signal peptide. Topologically, residues 27–614 (ATLPKEEVDA…GTGGGSSVGT (588 aa)) are extracellular. Asn-50 and Asn-81 each carry an N-linked (GlcNAc...) asparagine glycan. LRR repeat units lie at residues 86–110 (ICHVTNIVLKAQDLQGSLPTDLSGL), 111–134 (PFLQELDLTRNYLNGSIPPEWGAS), 136–157 (LLNISLLGNRISGSIPKELGNL), 158–181 (TTLSGLVLEYNQLSGKIPPELGNL), 182–204 (PNLKRLLLSSNNLSGEIPSTFAK), 206–231 (TTLTDLRISDNQFTGAIPDFIQNWKG), 253–276 (LGTLTDLRITDLSGPESPFPPLRN), 277–301 (MTSMKYLILRNCNLTGDLPAYLGQN), 302–324 (RKLKNLDLSFNKLSGPIPATYSG), and 326–349 (SDVDFIYFTSNMLNGQVPSWMVDQ). 3 N-linked (GlcNAc...) asparagine glycosylation sites follow: Asn-124, Asn-138, and Asn-156. N-linked (GlcNAc...) asparagine glycosylation is present at Asn-193. N-linked (GlcNAc...) asparagine glycans are attached at residues Asn-276 and Asn-289. N-linked (GlcNAc...) asparagine glycosylation is found at Asn-359, Asn-386, Asn-389, Asn-417, Asn-461, Asn-469, and Asn-498. The LRR 11 repeat unit spans residues 479 to 501 (QARLSAISLTYQALCLGKGNYTV). Residues 615 to 635 (VVGSVIASTVFLVLLIGGILW) traverse the membrane as a helical segment. Residues 636–1020 (WRGCLRPKSQ…LDSAYWNTRT (385 aa)) lie on the Cytoplasmic side of the membrane. In terms of domain architecture, Protein kinase spans 672 to 949 (FDPANKIGEG…VSMLEGHSTV (278 aa)). ATP is bound by residues 678-686 (IGEGGFGPV) and Lys-700. A Phosphotyrosine modification is found at Tyr-745. The active-site Proton acceptor is the Asp-798. At Ser-831 the chain carries Phosphoserine. Phosphothreonine occurs at positions 832 and 837. At Tyr-845 the chain carries Phosphotyrosine.

Belongs to the protein kinase superfamily. Ser/Thr protein kinase family.

The protein resides in the cell membrane. It carries out the reaction L-seryl-[protein] + ATP = O-phospho-L-seryl-[protein] + ADP + H(+). The catalysed reaction is L-threonyl-[protein] + ATP = O-phospho-L-threonyl-[protein] + ADP + H(+). This Arabidopsis thaliana (Mouse-ear cress) protein is Probable leucine-rich repeat receptor-like serine/threonine-protein kinase At3g14840 (LRR-RLK).